The sequence spans 152 residues: NADH-quinone oxidoreductase subunit A 2 (152 aa).

The next 3 helical transmembrane spans lie at 8–28, 63–83, and 90–110; these read FGKV…GYVS, FYVV…LFPW, and LGGF…LGLV.

The protein belongs to the complex I subunit 3 family. NDH-1 is composed of 14 different subunits. Subunits NuoA, H, J, K, L, M, N constitute the membrane sector of the complex.

The protein localises to the cell inner membrane. It catalyses the reaction a quinone + NADH + 5 H(+)(in) = a quinol + NAD(+) + 4 H(+)(out). Functionally, NDH-1 shuttles electrons from NADH, via FMN and iron-sulfur (Fe-S) centers, to quinones in the respiratory chain. The immediate electron acceptor for the enzyme in this species is believed to be a menaquinone. Couples the redox reaction to proton translocation (for every two electrons transferred, four hydrogen ions are translocated across the cytoplasmic membrane), and thus conserves the redox energy in a proton gradient. The polypeptide is NADH-quinone oxidoreductase subunit A 2 (Chloroherpeton thalassium (strain ATCC 35110 / GB-78)).